The sequence spans 471 residues: Cysteine--tRNA ligase (471 aa).

Cys29 lines the Zn(2+) pocket. The short motif at 31–41 is the 'HIGH' region element; that stretch reads PTVYNYIHIGN. 3 residues coordinate Zn(2+): Cys209, His234, and Glu238. The 'KMSKS' region motif lies at 266-270; that stretch reads KMSKS. ATP is bound at residue Lys269.

It belongs to the class-I aminoacyl-tRNA synthetase family. Monomer. It depends on Zn(2+) as a cofactor.

The protein resides in the cytoplasm. The catalysed reaction is tRNA(Cys) + L-cysteine + ATP = L-cysteinyl-tRNA(Cys) + AMP + diphosphate. The chain is Cysteine--tRNA ligase from Listeria monocytogenes serovar 1/2a (strain ATCC BAA-679 / EGD-e).